The chain runs to 1095 residues: Inactive phospholipase C-like protein 1 (1095 aa).

Basic and acidic residues predominate over residues 1–11; that stretch reads MAEGAAGREDP. Positions 1–61 are disordered; the sequence is MAEGAAGRED…PGAAGTPADS (61 aa). Residues Ser47 and Ser77 each carry the phosphoserine modification. Residues 83–222 form an interaction with PPP1C region; the sequence is SNQKCGGRKK…IWVSGLRYLV (140 aa). At Thr93 the chain carries Phosphothreonine; by PKA. Ser95 is modified (phosphoserine). The 111-residue stretch at 113 to 223 folds into the PH domain; sequence SFMQAGCELK…WVSGLRYLVS (111 aa). The PI-PLC X-box domain occupies 398–542; sequence QDMTQPLSHY…LKRMIIVKGK (145 aa). The segment at 543–567 is interaction with GABA A beta subunit; that stretch reads KLPSDPDVLEGEVTDEDEEAEMSRR. Thr556 is subject to Phosphothreonine. Ser569 is subject to Phosphoserine. In terms of domain architecture, PI-PLC Y-box spans 585–701; it reads LSDLVSICKS…GYVLRPSIMR (117 aa). Residues 701-830 enclose the C2 domain; sequence RDEVSYFSAN…PGYRHVPLRS (130 aa). Coiled-coil stretches lie at residues 894 to 914 and 1034 to 1059; these read LREAIDMRENMQNAIVSIKEL and LKGQGDLLKNAKNEAIENMKQIQLAC. A disordered region spans residues 1066–1095; that stretch reads KAPSSSAEAKSKRSLEAIEEKESSEENGKL. Basic and acidic residues predominate over residues 1074–1095; that stretch reads AKSKRSLEAIEEKESSEENGKL. A Phosphoserine modification is found at Ser1079.

As to quaternary structure, interacts with PPP2CA. Interacts with Ins(1,4,5)P3, Ins(1,4,5,6)P4, GABARAP, GABA receptor beta subunits, GABA receptor gamma-2 subunits and PPP1C. May form a ternary complex with GABA receptor beta subunit and GABARAP. The formation of a ternary complex with GABA receptor beta subunit and GABARAP could be the key step for facilitating the association of GABARAP with the GABA receptor gamma-2 subunit and to allow it to be transported at the right destination. Phosphorylated by the catalytic subunit of PKA. Phosphorylation of Thr-93 resulted in dissociation of PPP1C from PRIP1. In terms of tissue distribution, expressed in a variety of fetal and adult organs including brain, lung and kidney. Its expression was greatly reduced in small and non-small cell lung carcinoma. Isoform 1 is predominantly expressed in brain.

Its subcellular location is the cytoplasm. Involved in an inositol phospholipid-based intracellular signaling cascade. Shows no PLC activity to phosphatidylinositol 4,5-bisphosphate and phosphatidylinositol. Component in the phospho-dependent endocytosis process of GABA A receptor. Regulates the turnover of receptors and thus contributes to the maintenance of GABA-mediated synaptic inhibition. Its aberrant expression could contribute to the genesis and progression of lung carcinoma. Acts as an inhibitor of PPP1C. This chain is Inactive phospholipase C-like protein 1 (PLCL1), found in Homo sapiens (Human).